A 146-amino-acid chain; its full sequence is Hemoglobin subunit beta (146 aa).

The Globin domain maps to 2 to 146 (HWSAEEKQLI…VAHSLARVYH (145 aa)). The heme b site is built by histidine 63 and histidine 92.

Belongs to the globin family. As to quaternary structure, heterotetramer of two alpha chains and two beta chains. In terms of tissue distribution, red blood cells.

Involved in oxygen transport from the lung to the various peripheral tissues. This Microcephalophis gracilis (Graceful small-headed sea snake) protein is Hemoglobin subunit beta (HBB).